The primary structure comprises 365 residues: 2-aminoethylphosphonate--pyruvate transaminase (365 aa).

Lys-194 carries the N6-(pyridoxal phosphate)lysine modification.

The protein belongs to the class-V pyridoxal-phosphate-dependent aminotransferase family. PhnW subfamily. As to quaternary structure, homodimer. The cofactor is pyridoxal 5'-phosphate.

The enzyme catalyses (2-aminoethyl)phosphonate + pyruvate = phosphonoacetaldehyde + L-alanine. In terms of biological role, involved in phosphonate degradation. The chain is 2-aminoethylphosphonate--pyruvate transaminase from Bacillus cereus (strain Q1).